Consider the following 182-residue polypeptide: tRNA-splicing endonuclease (182 aa).

Residues Tyr-119, His-127, and Lys-158 contribute to the active site.

Belongs to the tRNA-intron endonuclease family. Archaeal short subfamily. As to quaternary structure, homotetramer; although the tetramer contains four active sites, only two participate in the cleavage. Therefore, it should be considered as a dimer of dimers.

It carries out the reaction pretRNA = a 3'-half-tRNA molecule with a 5'-OH end + a 5'-half-tRNA molecule with a 2',3'-cyclic phosphate end + an intron with a 2',3'-cyclic phosphate and a 5'-hydroxyl terminus.. In terms of biological role, endonuclease that removes tRNA introns. Cleaves pre-tRNA at the 5'- and 3'-splice sites to release the intron. The products are an intron and two tRNA half-molecules bearing 2',3' cyclic phosphate and 5'-OH termini. Recognizes a pseudosymmetric substrate in which 2 bulged loops of 3 bases are separated by a stem of 4 bp. The sequence is that of tRNA-splicing endonuclease from Saccharolobus islandicus (strain M.14.25 / Kamchatka #1) (Sulfolobus islandicus).